The sequence spans 197 residues: Beta-crystallin A2 (197 aa).

The interval 1–11 is N-terminal arm; that stretch reads MSSAPAPGSAP. Beta/gamma crystallin 'Greek key' domains lie at 12–52 and 53–99; these read VCLT…KVEN and GAWV…RPVL. Residues 100–105 are connecting peptide; it reads CANHSD. 2 consecutive Beta/gamma crystallin 'Greek key' domains span residues 106–147 and 148–196; these read SRVT…KVSS and GAWV…RRVQ.

The protein belongs to the beta/gamma-crystallin family. In terms of assembly, homo/heterodimer, or complexes of higher-order. The structure of beta-crystallin oligomers seems to be stabilized through interactions between the N-terminal arms.

Its function is as follows. Crystallins are the dominant structural components of the vertebrate eye lens. The chain is Beta-crystallin A2 (Cryba2) from Mus musculus (Mouse).